Here is a 314-residue protein sequence, read N- to C-terminus: Serine/threonine-protein phosphatase CPPED1 (314 aa).

Ser-2 is modified (phosphoserine). The catalytic stretch occupies residues 47 to 250 (KAWSTGDCDN…KVVFSGHYHR (204 aa)). Residues Asp-53, Asp-90, Asn-127, and His-247 each contribute to the a divalent metal cation site. Phosphoserine is present on Ser-294.

This sequence belongs to the metallophosphoesterase superfamily. CPPED1 family. It depends on a divalent metal cation as a cofactor.

It is found in the cytoplasm. The enzyme catalyses O-phospho-L-seryl-[protein] + H2O = L-seryl-[protein] + phosphate. It carries out the reaction O-phospho-L-threonyl-[protein] + H2O = L-threonyl-[protein] + phosphate. Protein phosphatase that dephosphorylates AKT family kinase specifically at 'Ser-473', blocking cell cycle progression and promoting cell apoptosis. May play an inhibitory role in glucose uptake by adipocytes. This chain is Serine/threonine-protein phosphatase CPPED1 (CPPED1), found in Pongo abelii (Sumatran orangutan).